The chain runs to 351 residues: UDP-3-O-acylglucosamine N-acyltransferase (351 aa).

H240 serves as the catalytic Proton acceptor.

This sequence belongs to the transferase hexapeptide repeat family. LpxD subfamily. In terms of assembly, homotrimer.

It catalyses the reaction a UDP-3-O-[(3R)-3-hydroxyacyl]-alpha-D-glucosamine + a (3R)-hydroxyacyl-[ACP] = a UDP-2-N,3-O-bis[(3R)-3-hydroxyacyl]-alpha-D-glucosamine + holo-[ACP] + H(+). Its pathway is bacterial outer membrane biogenesis; LPS lipid A biosynthesis. Functionally, catalyzes the N-acylation of UDP-3-O-acylglucosamine using 3-hydroxyacyl-ACP as the acyl donor. Is involved in the biosynthesis of lipid A, a phosphorylated glycolipid that anchors the lipopolysaccharide to the outer membrane of the cell. This Pseudomonas putida (strain ATCC 700007 / DSM 6899 / JCM 31910 / BCRC 17059 / LMG 24140 / F1) protein is UDP-3-O-acylglucosamine N-acyltransferase.